The primary structure comprises 817 residues: Protein EFR3 homolog B (817 aa).

Phosphoserine occurs at positions 212, 214, and 216.

It belongs to the EFR3 family. In terms of assembly, component of a phosphatidylinositol 4-kinase (PI4K) complex, composed of PI4KA, EFR3 (EFR3A or EFR3B), TTC7 (TTC7A or TTC7B) and HYCC (HYCC1 or HYCC2). In terms of processing, palmitoylated at its N-terminus, anchoring the protein to the plasma membrane. Widely expressed.

It is found in the cell membrane. Its subcellular location is the cytoplasm. It localises to the cytosol. Its function is as follows. Component of a complex required to localize phosphatidylinositol 4-kinase (PI4K) to the plasma membrane. The complex acts as a regulator of phosphatidylinositol 4-phosphate (PtdIns(4)P) synthesis. In the complex, EFR3B probably acts as the membrane-anchoring component. Also involved in responsiveness to G-protein-coupled receptors; it is however unclear whether this role is direct or indirect. This is Protein EFR3 homolog B (Efr3b) from Mus musculus (Mouse).